Consider the following 335-residue polypeptide: Protein-arginine kinase (335 aa).

Positions 21–244 constitute a Phosphagen kinase C-terminal domain; that stretch reads VIISSRIRLA…NQIINEEKQI (224 aa). ATP is bound by residues 24 to 28, H82, R115, 166 to 170, and 197 to 202; these read SSRIR, RASVM, and RGIYGE.

It belongs to the ATP:guanido phosphotransferase family.

The enzyme catalyses L-arginyl-[protein] + ATP = N(omega)-phospho-L-arginyl-[protein] + ADP + H(+). Its function is as follows. Catalyzes the specific phosphorylation of arginine residues in proteins. This chain is Protein-arginine kinase, found in Staphylococcus epidermidis (strain ATCC 12228 / FDA PCI 1200).